The following is a 673-amino-acid chain: UvrABC system protein B (673 aa).

The Helicase ATP-binding domain maps to 26–183; the sequence is EGLEDGLAHQ…RRLAELQYTR (158 aa). An ATP-binding site is contributed by 39–46; the sequence is GVTGSGKT. The Beta-hairpin signature appears at 92 to 115; it reads YYDYYQPEAYVPSSDTFIEKDASV. The Helicase C-terminal domain occupies 431-597; sequence QVDDLLSEIR…GLNKKVVDIL (167 aa). The region spanning 633 to 668 is the UVR domain; it reads QQKIHELEGQMMQHAQNLEFEEAAQIRDQLHQLREL.

Belongs to the UvrB family. As to quaternary structure, forms a heterotetramer with UvrA during the search for lesions. Interacts with UvrC in an incision complex.

Its subcellular location is the cytoplasm. Its function is as follows. The UvrABC repair system catalyzes the recognition and processing of DNA lesions. A damage recognition complex composed of 2 UvrA and 2 UvrB subunits scans DNA for abnormalities. Upon binding of the UvrA(2)B(2) complex to a putative damaged site, the DNA wraps around one UvrB monomer. DNA wrap is dependent on ATP binding by UvrB and probably causes local melting of the DNA helix, facilitating insertion of UvrB beta-hairpin between the DNA strands. Then UvrB probes one DNA strand for the presence of a lesion. If a lesion is found the UvrA subunits dissociate and the UvrB-DNA preincision complex is formed. This complex is subsequently bound by UvrC and the second UvrB is released. If no lesion is found, the DNA wraps around the other UvrB subunit that will check the other stand for damage. The polypeptide is UvrABC system protein B (Salmonella agona (strain SL483)).